A 634-amino-acid chain; its full sequence is Alpha-L-iduronidase (634 aa).

The first 16 residues, 1–16, serve as a signal peptide directing secretion; it reads MLTFFAAFLAAPLALA. 3 residues coordinate alpha-D-mannopyranose: Pro44, Leu46, and His48. His81 is a binding site for alpha-L-iduronate. A glycan (N-linked (GlcNAc...) asparagine) is linked at Asn100. Alpha-L-iduronate is bound by residues Asn171 and Glu172. The active-site Proton donor is the Glu172. Asn180 and Asn233 each carry an N-linked (GlcNAc...) asparagine glycan. Positions 254, 289, and 295 each coordinate alpha-L-iduronate. The Nucleophile role is filled by Glu289. Trp296 contacts alpha-D-mannopyranose. N-linked (GlcNAc...) asparagine glycosylation is present at Asn326. Asp339 and Arg353 together coordinate alpha-L-iduronate. N-linked (GlcNAc...) asparagine glycosylation is found at Asn362, Asn405, and Asn441. A disulfide bond links Cys531 and Cys567.

Belongs to the glycosyl hydrolase 39 family. As to quaternary structure, monomer. N-glycosylation contributes to substrate binding and is required for full enzymatic activity. In terms of tissue distribution, ubiquitous.

The protein resides in the lysosome. The catalysed reaction is Hydrolysis of unsulfated alpha-L-iduronosidic linkages in dermatan sulfate.. This is Alpha-L-iduronidase (Idua) from Mus musculus (Mouse).